The following is a 356-amino-acid chain: Holliday junction branch migration complex subunit RuvB (356 aa).

Positions 13–197 (LPPARRMLSA…FGIVARLEFY (185 aa)) are large ATPase domain (RuvB-L). ATP-binding positions include Leu-36, Arg-37, Gly-78, Lys-81, Thr-82, Thr-83, 144–146 (EDY), Arg-187, Tyr-197, and Arg-234. A Mg(2+)-binding site is contributed by Thr-82. Positions 198 to 268 (TPEELARIVK…IANRALAMLD (71 aa)) are small ATPAse domain (RuvB-S). The segment at 271 to 356 (PQGFDLMDRK…RGNAENLFEE (86 aa)) is head domain (RuvB-H). DNA contacts are provided by Arg-326 and Arg-331.

The protein belongs to the RuvB family. As to quaternary structure, homohexamer. Forms an RuvA(8)-RuvB(12)-Holliday junction (HJ) complex. HJ DNA is sandwiched between 2 RuvA tetramers; dsDNA enters through RuvA and exits via RuvB. An RuvB hexamer assembles on each DNA strand where it exits the tetramer. Each RuvB hexamer is contacted by two RuvA subunits (via domain III) on 2 adjacent RuvB subunits; this complex drives branch migration. In the full resolvosome a probable DNA-RuvA(4)-RuvB(12)-RuvC(2) complex forms which resolves the HJ.

It localises to the cytoplasm. The enzyme catalyses ATP + H2O = ADP + phosphate + H(+). The RuvA-RuvB-RuvC complex processes Holliday junction (HJ) DNA during genetic recombination and DNA repair, while the RuvA-RuvB complex plays an important role in the rescue of blocked DNA replication forks via replication fork reversal (RFR). RuvA specifically binds to HJ cruciform DNA, conferring on it an open structure. The RuvB hexamer acts as an ATP-dependent pump, pulling dsDNA into and through the RuvAB complex. RuvB forms 2 homohexamers on either side of HJ DNA bound by 1 or 2 RuvA tetramers; 4 subunits per hexamer contact DNA at a time. Coordinated motions by a converter formed by DNA-disengaged RuvB subunits stimulates ATP hydrolysis and nucleotide exchange. Immobilization of the converter enables RuvB to convert the ATP-contained energy into a lever motion, pulling 2 nucleotides of DNA out of the RuvA tetramer per ATP hydrolyzed, thus driving DNA branch migration. The RuvB motors rotate together with the DNA substrate, which together with the progressing nucleotide cycle form the mechanistic basis for DNA recombination by continuous HJ branch migration. Branch migration allows RuvC to scan DNA until it finds its consensus sequence, where it cleaves and resolves cruciform DNA. This is Holliday junction branch migration complex subunit RuvB from Polaromonas naphthalenivorans (strain CJ2).